A 186-amino-acid chain; its full sequence is Ribonuclease M5 (186 aa).

A Toprim domain is found at 6–89 (SQVIVVEGRD…AFLKRDEAVP (84 aa)). Residues Glu12, Asp58, and Asp60 each contribute to the Mg(2+) site.

This sequence belongs to the ribonuclease M5 family. Mg(2+) is required as a cofactor.

Its subcellular location is the cytoplasm. The enzyme catalyses Endonucleolytic cleavage of RNA, removing 21 and 42 nucleotides, respectively, from the 5'- and 3'-termini of a 5S-rRNA precursor.. Its function is as follows. Required for correct processing of both the 5' and 3' ends of 5S rRNA precursor. Cleaves both sides of a double-stranded region yielding mature 5S rRNA in one step. The chain is Ribonuclease M5 from Streptococcus pneumoniae (strain ATCC BAA-255 / R6).